The primary structure comprises 476 residues: Stromelysin-2 (476 aa).

A signal peptide spans 1–17 (MMHLAFLVLLCLPVCSA). The propeptide at 18–98 (YPLSGAAKEE…PRCGVPDVGH (81 aa)) is activation peptide. A Cysteine switch motif is present at residues 89–96 (PRCGVPDV). The Zn(2+) site is built by cysteine 91, histidine 167, aspartate 169, histidine 182, histidine 195, and histidine 217. Glutamate 218 is a catalytic residue. Zn(2+) is bound by residues histidine 221 and histidine 227. Hemopexin repeat units lie at residues 286–335 (PAKC…WPSL), 336–382 (PSYL…GFPP), 384–432 (IRKI…FPGV), and 433–476 (EPKV…WLHC). A disulfide bridge connects residues cysteine 289 and cysteine 476.

Belongs to the peptidase M10A family. Zn(2+) serves as cofactor. Ca(2+) is required as a cofactor.

The protein localises to the secreted. Its subcellular location is the extracellular space. It is found in the extracellular matrix. The enzyme catalyses Similar to stromelysin 1, but action on collagen types III, IV and V is weak.. Its function is as follows. Can degrade fibronectin, gelatins of type I, III, IV, and V; weakly collagens III, IV, and V. Activates procollagenase. The polypeptide is Stromelysin-2 (MMP10) (Homo sapiens (Human)).